A 188-amino-acid polypeptide reads, in one-letter code: Calcium load-activated calcium channel (188 aa).

The Lumenal segment spans residues 1-4; that stretch reads MSTM. Residues 5 to 32 form a helical membrane-spanning segment; sequence FADTILIVFISICTALLAEGITWVLVYR. The stretch at 32–89 forms a coiled coil; that stretch reads RTDKYKRLKAEVEKQSKKLEKKKETITESAGRQQKKKIERQEEKLKNNNRDLSMVRMK. At 33-86 the chain is on the cytoplasmic side; the sequence is TDKYKRLKAEVEKQSKKLEKKKETITESAGRQQKKKIERQEEKLKNNNRDLSMV. A helical membrane pass occupies residues 87–106; sequence RMKSMFAIGFCFTALMGMFN. The Lumenal segment spans residues 107 to 120; that stretch reads SIFDGRVVAKLPFV. An intramembrane segment occupies 121 to 130; the sequence is PLSYIQGLSH. Residues 131–140 lie on the Lumenal side of the membrane; sequence RNLLGEDYTD. A helical membrane pass occupies residues 141–162; sequence CSFIFLYILCTMSIRQNIQKML. The Cytoplasmic portion of the chain corresponds to 163–188; it reads GLAPSRAATKQAGGFLGPPPQAAKFS.

This sequence belongs to the TMCO1 family. In terms of assembly, homodimer and homotetramer. Component of the multi-pass translocon (MPT) complex.

It localises to the endoplasmic reticulum membrane. The protein localises to the golgi apparatus membrane. In terms of biological role, calcium-selective channel required to prevent calcium stores from overfilling, thereby playing a key role in calcium homeostasis. In response to endoplasmic reticulum (ER) overloading, assembles into a homotetramer, forming a functional calcium-selective channel, regulating the calcium content in endoplasmic reticulum store. Component of the multi-pass translocon (MPT) complex that mediates insertion of multi-pass membrane proteins into the lipid bilayer of membranes. The sequence is that of Calcium load-activated calcium channel from Danio rerio (Zebrafish).